Consider the following 269-residue polypeptide: Shikimate dehydrogenase (NADP(+)) (269 aa).

Shikimate contacts are provided by residues 22–24 and threonine 68; that span reads TLS. The active-site Proton acceptor is lysine 72. Asparagine 93 and aspartate 104 together coordinate shikimate. NADP(+) contacts are provided by residues 128–132, 152–157, and phenylalanine 210; these read GAGGA and NRTNLR. Tyrosine 212 provides a ligand contact to shikimate. Position 233 (glycine 233) interacts with NADP(+).

The protein belongs to the shikimate dehydrogenase family. Homodimer.

The enzyme catalyses shikimate + NADP(+) = 3-dehydroshikimate + NADPH + H(+). The protein operates within metabolic intermediate biosynthesis; chorismate biosynthesis; chorismate from D-erythrose 4-phosphate and phosphoenolpyruvate: step 4/7. In terms of biological role, involved in the biosynthesis of the chorismate, which leads to the biosynthesis of aromatic amino acids. Catalyzes the reversible NADPH linked reduction of 3-dehydroshikimate (DHSA) to yield shikimate (SA). The sequence is that of Shikimate dehydrogenase (NADP(+)) from Saccharolobus islandicus (strain Y.N.15.51 / Yellowstone #2) (Sulfolobus islandicus).